A 276-amino-acid polypeptide reads, in one-letter code: Rhomboid protease GlpG (276 aa).

Helical transmembrane passes span 94–114 (GPVTWVMMIACVVVFIAMQIL), 142–162 (ALMHFSLMHILFNLLWWWYLG), 169–189 (LGSGKLIVITLISALLSGYVQ), 192–212 (FSGPWFGGLSGVVYALMGYVW), 229–249 (LIIFALIWIVAGWFDLFGMSM), and 250–270 (ANGAHIAGLAVGLAMAFVDSL). Ser201 serves as the catalytic Nucleophile. His254 is an active-site residue.

This sequence belongs to the peptidase S54 family.

The protein resides in the cell inner membrane. It carries out the reaction Cleaves type-1 transmembrane domains using a catalytic dyad composed of serine and histidine that are contributed by different transmembrane domains.. Its function is as follows. Rhomboid-type serine protease that catalyzes intramembrane proteolysis. The polypeptide is Rhomboid protease GlpG (Escherichia fergusonii (strain ATCC 35469 / DSM 13698 / CCUG 18766 / IAM 14443 / JCM 21226 / LMG 7866 / NBRC 102419 / NCTC 12128 / CDC 0568-73)).